Here is a 467-residue protein sequence, read N- to C-terminus: 6-phosphogluconate dehydrogenase, decarboxylating (467 aa).

Residues 9–14 (GLGVMG), 32–34 (NYT), 73–75 (VTA), and asparagine 101 each bind NADP(+). Substrate contacts are provided by residues asparagine 101 and 127–129 (SGG). The active-site Proton acceptor is lysine 181. Residue 184-185 (HN) coordinates substrate. Glutamate 188 serves as the catalytic Proton donor. Substrate is bound by residues tyrosine 189, lysine 259, arginine 286, and histidine 451.

The protein belongs to the 6-phosphogluconate dehydrogenase family. As to quaternary structure, homodimer.

It catalyses the reaction 6-phospho-D-gluconate + NADP(+) = D-ribulose 5-phosphate + CO2 + NADPH. It functions in the pathway carbohydrate degradation; pentose phosphate pathway; D-ribulose 5-phosphate from D-glucose 6-phosphate (oxidative stage): step 3/3. In terms of biological role, catalyzes the oxidative decarboxylation of 6-phosphogluconate to ribulose 5-phosphate and CO(2), with concomitant reduction of NADP to NADPH. The polypeptide is 6-phosphogluconate dehydrogenase, decarboxylating (gntZ) (Bacillus licheniformis).